Reading from the N-terminus, the 453-residue chain is Plasticin (453 aa).

Residues 1 to 51 are head; the sequence is MSHSTFSHLFSPHFGAPVYSPVSSRIGGRYVSSSVPTRSVDFRSRSSAPAP. The tract at residues 71–112 is coil 1A; that stretch reads FATRSNEKRELQELNDRFASFIEKVRHLEQQNSKLILELGQY. An IF rod domain is found at 77–390; it reads EKRELQELND…KLLEGEENRI (314 aa). Residues 113-126 form a linker 1 region; the sequence is KDQHQGSTGRINEL. The coil 1B stretch occupies residues 127–222; sequence CQQEMRELRR…KMHDEEIQDV (96 aa). Residues 223 to 245 are linker 12; that stretch reads QVSVQSQQMKMEVMETSSRPDLT. The tract at residues 246–391 is coil 2; sequence GALRDIRAQY…LLEGEENRIV (146 aa). The tract at residues 392–453 is tail; it reads VPIMKMPSMS…KKDSHGQGKD (62 aa). Positions 421–453 are disordered; the sequence is IKTVETRDGEVVKESTKEKGRDEKKDSHGQGKD. Basic and acidic residues predominate over residues 424 to 453; the sequence is VETRDGEVVKESTKEKGRDEKKDSHGQGKD.

Belongs to the intermediate filament family. As to expression, optic nerve.

In terms of biological role, type III neurofilament. In Carassius auratus (Goldfish), this protein is Plasticin.